A 424-amino-acid polypeptide reads, in one-letter code: Kynureninase (424 aa).

Residues Leu-109, Thr-110, 137–140 (FPSD), Asp-222, His-225, and Tyr-247 contribute to the pyridoxal 5'-phosphate site. Lys-248 is modified (N6-(pyridoxal phosphate)lysine). Pyridoxal 5'-phosphate contacts are provided by Trp-278 and Asn-306.

It belongs to the kynureninase family. In terms of assembly, homodimer. It depends on pyridoxal 5'-phosphate as a cofactor.

It carries out the reaction L-kynurenine + H2O = anthranilate + L-alanine + H(+). The enzyme catalyses 3-hydroxy-L-kynurenine + H2O = 3-hydroxyanthranilate + L-alanine + H(+). It functions in the pathway amino-acid degradation; L-kynurenine degradation; L-alanine and anthranilate from L-kynurenine: step 1/1. Its pathway is cofactor biosynthesis; NAD(+) biosynthesis; quinolinate from L-kynurenine: step 2/3. Functionally, catalyzes the cleavage of L-kynurenine (L-Kyn) and L-3-hydroxykynurenine (L-3OHKyn) into anthranilic acid (AA) and 3-hydroxyanthranilic acid (3-OHAA), respectively. This is Kynureninase from Koribacter versatilis (strain Ellin345).